A 304-amino-acid chain; its full sequence is tRNA pseudouridine synthase B (304 aa).

D40 functions as the Nucleophile in the catalytic mechanism.

The protein belongs to the pseudouridine synthase TruB family. Type 1 subfamily.

It carries out the reaction uridine(55) in tRNA = pseudouridine(55) in tRNA. In terms of biological role, responsible for synthesis of pseudouridine from uracil-55 in the psi GC loop of transfer RNAs. In Halalkalibacterium halodurans (strain ATCC BAA-125 / DSM 18197 / FERM 7344 / JCM 9153 / C-125) (Bacillus halodurans), this protein is tRNA pseudouridine synthase B.